The chain runs to 232 residues: Thiamine import ATP-binding protein ThiQ (232 aa).

One can recognise an ABC transporter domain in the interval 2–230 (LKLTDITWLY…KASASALLGI (229 aa)). ATP is bound at residue 32–39 (GPSGAGKS).

The protein belongs to the ABC transporter superfamily. Thiamine importer (TC 3.A.1.19.1) family. The complex is composed of two ATP-binding proteins (ThiQ), two transmembrane proteins (ThiP) and a solute-binding protein (ThiB).

Its subcellular location is the cell inner membrane. It catalyses the reaction thiamine(out) + ATP + H2O = thiamine(in) + ADP + phosphate + H(+). In terms of biological role, part of the ABC transporter complex ThiBPQ involved in thiamine import. Responsible for energy coupling to the transport system. The chain is Thiamine import ATP-binding protein ThiQ from Escherichia coli (strain UTI89 / UPEC).